The following is a 377-amino-acid chain: DNA replication and repair protein RecF (377 aa).

An ATP-binding site is contributed by 30 to 37; the sequence is GPNGVGKT.

Belongs to the RecF family.

It localises to the cytoplasm. In terms of biological role, the RecF protein is involved in DNA metabolism; it is required for DNA replication and normal SOS inducibility. RecF binds preferentially to single-stranded, linear DNA. It also seems to bind ATP. This chain is DNA replication and repair protein RecF, found in Salinispora tropica (strain ATCC BAA-916 / DSM 44818 / JCM 13857 / NBRC 105044 / CNB-440).